A 232-amino-acid chain; its full sequence is Ion-translocating oxidoreductase complex subunit E (232 aa).

A run of 5 helical transmembrane segments spans residues 39 to 59, 69 to 89, 92 to 112, 125 to 145, and 182 to 202; these read LGLG…ISSL, IPIY…LINA, FGLY…CIVV, ALSA…MFVL, and PFLL…MLAV.

This sequence belongs to the NqrDE/RnfAE family. In terms of assembly, the complex is composed of six subunits: RnfA, RnfB, RnfC, RnfD, RnfE and RnfG.

The protein resides in the cell inner membrane. Part of a membrane-bound complex that couples electron transfer with translocation of ions across the membrane. The sequence is that of Ion-translocating oxidoreductase complex subunit E from Klebsiella pneumoniae (strain 342).